The primary structure comprises 119 residues: cAMP-responsive element-binding protein-like 2 (119 aa).

Residues 1 to 23 form a disordered region; the sequence is MDDSKIVAGKVKKPGKRGRKPAK. Basic residues predominate over residues 10 to 21; that stretch reads KVKKPGKRGRKP. Residues 23 to 86 form the bZIP domain; the sequence is KIDLKAKLER…LAMDQGKIPS (64 aa). The tract at residues 29–60 is basic motif; the sequence is KLERSRQSARECRARKKLRYQYLEELVSSKER. The interval 62-69 is leucine-zipper; it reads ICALREEL. The tract at residues 95–119 is disordered; the sequence is DEQKTPQSCSNKTTKNSKYSSSSGI. Residues 102-119 show a composition bias toward low complexity; the sequence is SCSNKTTKNSKYSSSSGI.

This sequence belongs to the bZIP family. ATF subfamily.

It is found in the nucleus. In terms of biological role, probable regulator of creb1 transcriptional activity which is involved in adipose cells differentiation. May also play a regulatory role in the cell cycle. The protein is cAMP-responsive element-binding protein-like 2 (crebl2) of Danio rerio (Zebrafish).